A 68-amino-acid chain; its full sequence is ATP synthase F(0) complex subunit 8 (68 aa).

A helical membrane pass occupies residues 8 to 24 (TWFTIIMAMLPTLYLIT). K54 bears the N6-acetyllysine; alternate mark. K54 carries the post-translational modification N6-succinyllysine; alternate. K57 is modified (N6-acetyllysine).

It belongs to the ATPase protein 8 family. As to quaternary structure, component of the ATP synthase complex composed at least of ATP5F1A/subunit alpha, ATP5F1B/subunit beta, ATP5MC1/subunit c (homooctomer), MT-ATP6/subunit a, MT-ATP8/subunit 8, ATP5ME/subunit e, ATP5MF/subunit f, ATP5MG/subunit g, ATP5MK/subunit k, ATP5MJ/subunit j, ATP5F1C/subunit gamma, ATP5F1D/subunit delta, ATP5F1E/subunit epsilon, ATP5PF/subunit F6, ATP5PB/subunit b, ATP5PD/subunit d, ATP5PO/subunit OSCP. ATP synthase complex consists of a soluble F(1) head domain (subunits alpha(3) and beta(3)) - the catalytic core - and a membrane F(0) domain - the membrane proton channel (subunits c, a, 8, e, f, g, k and j). These two domains are linked by a central stalk (subunits gamma, delta, and epsilon) rotating inside the F1 region and a stationary peripheral stalk (subunits F6, b, d, and OSCP). Interacts with PRICKLE3.

Its subcellular location is the mitochondrion membrane. Subunit 8, of the mitochondrial membrane ATP synthase complex (F(1)F(0) ATP synthase or Complex V) that produces ATP from ADP in the presence of a proton gradient across the membrane which is generated by electron transport complexes of the respiratory chain. ATP synthase complex consist of a soluble F(1) head domain - the catalytic core - and a membrane F(1) domain - the membrane proton channel. These two domains are linked by a central stalk rotating inside the F(1) region and a stationary peripheral stalk. During catalysis, ATP synthesis in the catalytic domain of F(1) is coupled via a rotary mechanism of the central stalk subunits to proton translocation. In vivo, can only synthesize ATP although its ATP hydrolase activity can be activated artificially in vitro. Part of the complex F(0) domain. In Papio hamadryas (Hamadryas baboon), this protein is ATP synthase F(0) complex subunit 8.